The sequence spans 305 residues: MKDFQDQVAFITGGASGAGFGQAKVFGQAGAKIVVADVRAEAVEKAVAELEGLGITAHGIVLDIMDREAYARAADEVEAVFGQAPTLLSNTAGVNSFGPIEKTTYDDFDWIIGVNLNGVINGMVTFVPRMIASGRPGHIVTVSSLGGFMGSALAGPYSAAKAASINLMEGYRQGLEKYGIGVSVCTPANIKSNIAEASRLRPAKYGTSGYVENEESIASLHSIHQHGLEPEKLAEAIKKGVEDNALYIIPYPEVREGLEKHFQAIIDSVAPMESDPEGARQRVEALMAWGRDRTRVFAEGDKKGA.

NAD(+) is bound at residue 10–34; sequence FITGGASGAGFGQAKVFGQAGAKIV. Position 144 (serine 144) interacts with substrate. Tyrosine 157 acts as the Proton acceptor in catalysis.

This sequence belongs to the short-chain dehydrogenases/reductases (SDR) family.

Its pathway is secondary metabolite metabolism; lignin degradation. Functionally, catalyzes the C alpha dehydrogenation of arylglycerol-beta-aryl ether (C alpha alcohol type) (compound IV). This Sphingobium sp. (strain NBRC 103272 / SYK-6) protein is C alpha-dehydrogenase (ligD).